The chain runs to 213 residues: DELTA-actitoxin-Aas1a (213 aa).

An N-terminal signal peptide occupies residues methionine 1–alanine 19. Residues leucine 20 to arginine 34 constitute a propeptide that is removed on maturation. The segment at alanine 37 to glycine 46 is plays an important role in the hemolytic activity. Positions glycine 45–asparagine 64 are N-terminal region. Phosphocholine-binding residues include serine 88, valine 121, serine 139, proline 141, tyrosine 167, tyrosine 171, and tyrosine 172. Positions serine 139–lysine 154 are trp-rich region, which is important for the binding to lipid membrane. Positions lysine 178 to aspartate 180 match the Cell attachment site, crucial for protein stability motif.

Belongs to the actinoporin family. Sea anemone subfamily. In terms of assembly, octamer or nonamer in membranes. Monomer in the soluble state.

The protein resides in the secreted. It localises to the nematocyst. The protein localises to the target cell membrane. Functionally, pore-forming protein that forms cation-selective hydrophilic pores of around 1 nm and causes cytolysis. Pore formation is a multi-step process that involves specific recognition of membrane sphingomyelin (but neither cholesterol nor phosphatidylcholine) using aromatic rich region and adjacent phosphocholine (POC) binding site, firm binding to the membrane (mainly driven by hydrophobic interactions) accompanied by the transfer of the N-terminal region to the lipid-water interface and finally pore formation after oligomerization of monomers. This protein shows potent hemolytic activity (EC(50)=8.8 ng/ml) that is specifically inhibited by sphingomyelin. Shows no phospholipase A2 activity, nor antimicrobial activity against the four bacteria tested. Is lethal to crayfish. This chain is DELTA-actitoxin-Aas1a, found in Anthopleura asiatica (Sea anemone).